Reading from the N-terminus, the 453-residue chain is Ribosomal protein uS12 methylthiotransferase RimO (453 aa).

In terms of domain architecture, MTTase N-terminal spans 3-118; the sequence is KKVGIISLGC…IAKVIEEFYS (116 aa). Positions 12, 48, 81, 162, 166, and 169 each coordinate [4Fe-4S] cluster. In terms of domain architecture, Radical SAM core spans 148-378; sequence STNSGYAYLK…MQLQKEIVQR (231 aa). The TRAM domain occupies 381-449; sequence ESRLEKVYKT…DYDLIGEVIN (69 aa).

The protein belongs to the methylthiotransferase family. RimO subfamily. Requires [4Fe-4S] cluster as cofactor.

Its subcellular location is the cytoplasm. The catalysed reaction is L-aspartate(89)-[ribosomal protein uS12]-hydrogen + (sulfur carrier)-SH + AH2 + 2 S-adenosyl-L-methionine = 3-methylsulfanyl-L-aspartate(89)-[ribosomal protein uS12]-hydrogen + (sulfur carrier)-H + 5'-deoxyadenosine + L-methionine + A + S-adenosyl-L-homocysteine + 2 H(+). Its function is as follows. Catalyzes the methylthiolation of an aspartic acid residue of ribosomal protein uS12. This is Ribosomal protein uS12 methylthiotransferase RimO from Acetivibrio thermocellus (strain ATCC 27405 / DSM 1237 / JCM 9322 / NBRC 103400 / NCIMB 10682 / NRRL B-4536 / VPI 7372) (Clostridium thermocellum).